The chain runs to 1852 residues: Voltage-dependent L-type calcium channel subunit alpha-1S (1852 aa).

Residues 1-23 are disordered; that stretch reads MEPPSPQDEGLRKKQPKKPVPEI. Topologically, residues 1-51 are cytoplasmic; that stretch reads MEPPSPQDEGLRKKQPKKPVPEILPRPPRALFCLTLQNPLRKACISIVEWK. Residues 38–337 form an I repeat; it reads NPLRKACISI…LVLGVLSGEF (300 aa). Residues 52–70 form a helical membrane-spanning segment; that stretch reads PFETIILLTIFANCVALAV. The Extracellular segment spans residues 71 to 85; the sequence is YLPMPEDDNNTLNLG. Residue Asn79 is glycosylated (N-linked (GlcNAc...) asparagine). The helical transmembrane segment at 86 to 106 threads the bilayer; sequence LEKLEYFFLIVFSIEAAMKII. Residues 107–115 lie on the Cytoplasmic side of the membrane; the sequence is AYGFLFHQD. The chain crosses the membrane as a helical span at residues 116–136; that stretch reads AYLRSGWNVLDFIIVFLGVFT. The Extracellular portion of the chain corresponds to 137-160; the sequence is VILEQVNIIQTNTAPMSSKGAGLD. The chain crosses the membrane as a helical span at residues 161 to 179; it reads VKALRAFRVLRPLRLVSGV. Topologically, residues 180–196 are cytoplasmic; that stretch reads PSLQVVLNSIFKAMLPL. A helical transmembrane segment spans residues 197–218; it reads FHIALLVLFMVIIYAIIGLELF. Residues 219-279 lie on the Extracellular side of the membrane; that stretch reads KGKMHKTCYF…HGITHFDNFG (61 aa). 2 cysteine pairs are disulfide-bonded: Cys226–Cys254 and Cys245–Cys261. An N-linked (GlcNAc...) asparagine glycan is attached at Asn257. An intramembrane region (pore-forming) is located at residues 280–301; it reads FSMLTVYQCISMEGWTDVLYWV. Positions 290–293 match the Selectivity filter of repeat I motif; that stretch reads SMEG. Glu292 provides a ligand contact to Ca(2+). Over 302 to 309 the chain is Extracellular; the sequence is NDAIGNEW. The chain crosses the membrane as a helical span at residues 310–330; sequence PWIYFVTLILLGSFFILNLVL. At 331 to 432 the chain is on the cytoplasmic side; sequence GVLSGEFTKE…WKCHDLVKSK (102 aa). The tract at residues 357 to 374 is binding to the beta subunit; sequence QQLEEDLRGYMSWITQGE. Ser393 and Ser397 each carry phosphoserine. Residues 418–664 form an II repeat; that stretch reads NRVFRWKCHD…VFLAIAVDNL (247 aa). The chain crosses the membrane as a helical span at residues 433–451; it reads VFYWLVILIVALNTLSIAS. The Extracellular segment spans residues 452-462; the sequence is EHHNQPLWLTH. A helical membrane pass occupies residues 463–483; that stretch reads LQDVANRVLLTLFTIEMLMKM. The Cytoplasmic portion of the chain corresponds to 484–494; the sequence is YGLGLRQYFMS. The helical transmembrane segment at 495 to 514 threads the bilayer; the sequence is IFNRFDCFVVCSGILEILLV. The Extracellular portion of the chain corresponds to 515 to 523; sequence ESGAMSPLG. Residues 524 to 542 traverse the membrane as a helical segment; sequence ISVLRCIRLLRLFKITKYW. Residues 543-561 lie on the Cytoplasmic side of the membrane; sequence TSLSNLVASLLNSIRSIAS. A helical membrane pass occupies residues 562–581; it reads LLLLLFLFIIIFALLGMQLF. Residues 582–601 lie on the Extracellular side of the membrane; the sequence is GGRYDFEDTEVRRSNFDNFP. The segment at residues 602–623 is an intramembrane region (pore-forming); that stretch reads QALISVFQVLTGEDWNSVMYNG. The Selectivity filter of repeat II motif lies at 612-615; that stretch reads TGED. Position 614 (Glu614) interacts with Ca(2+). Topologically, residues 624 to 633 are extracellular; the sequence is IMAYGGPTYP. A helical transmembrane segment spans residues 634 to 653; it reads GVLVCIYFIILFVCGNYILL. The Cytoplasmic segment spans residues 654–799; the sequence is NVFLAIAVDN…VLCHRIVNAT (146 aa). Disordered regions lie at residues 675–712 and 731–757; these read KAKA…SKGE and EVKD…VSPR. Position 687 is a phosphoserine; by PKA (Ser687). The span at 690–711 shows a compositional bias: basic and acidic residues; that stretch reads LPDKSEEERATVTKKLEQKSKG. Acidic residues predominate over residues 742–751; that stretch reads PGDDEEDEPE. One copy of the III repeat lies at 768–1068; sequence EKAVPIPEAS…IFVGFVIVTF (301 aa). A helical transmembrane segment spans residues 800–818; sequence WFTNFILLFILLSSAALAA. Residues 819–830 are Extracellular-facing; that stretch reads EDPIRADSMRNQ. A helical transmembrane segment spans residues 831 to 850; it reads ILEYFDYVFTAVFTVEIVLK. At 851 to 866 the chain is on the cytoplasmic side; that stretch reads MTTYGAFLHKGSFCRN. A helical membrane pass occupies residues 867 to 885; that stretch reads YFNILDLLVVAVSLISMGL. The Extracellular portion of the chain corresponds to 886 to 892; it reads ESSAISV. The helical transmembrane segment at 893–911 threads the bilayer; sequence VKILRVLRVLRPLRAINRA. Residues 912–930 are Cytoplasmic-facing; sequence KGLKHVVQCVFVAIRTIGN. A helical membrane pass occupies residues 931–950; the sequence is IVLVTTLLQFMFACIGVQLF. At 951 to 1000 the chain is on the extracellular side; sequence KGKFYSCNDLSKMTEEECRGYYYIYKDGDPTQIELRPRQWIHNDFHFDNV. Cys957 and Cys968 are disulfide-bonded. Residues 988–1077 form a dihydropyridine binding region; sequence RQWIHNDFHF…FQEQGETEYK (90 aa). Residues 1001–1021 constitute an intramembrane region (pore-forming); sequence LSAMMSLFTVSTFEGWPQLLY. A Selectivity filter of repeat III motif is present at residues 1012–1015; sequence TFEG. Ca(2+) is bound at residue Glu1014. Topologically, residues 1022-1038 are extracellular; the sequence is KAIDSNEEDTGPVYNNR. A helical membrane pass occupies residues 1039–1060; sequence VEMAIFFIIYIILIAFFMMNIF. The Cytoplasmic segment spans residues 1061–1118; it reads VGFVIVTFQEQGETEYKNCELDKNQRQCVQYALKARPLRCYIPKNPYQYQVWYVVTSS. An IV repeat occupies 1105–1384; that stretch reads NPYQYQVWYV…LFVAVIMDNF (280 aa). The helical transmembrane segment at 1119-1140 threads the bilayer; it reads YFEYLMFALIMLNTICLGMQHY. The N-linked (GlcNAc...) asparagine glycan is linked to Asn1141. Topologically, residues 1141–1148 are extracellular; the sequence is NQSEQMNH. A helical transmembrane segment spans residues 1149–1170; sequence ISDILNVAFTIIFTLEMVLKLI. The Cytoplasmic portion of the chain corresponds to 1171 to 1180; sequence AFKPRGYFGD. A helical membrane pass occupies residues 1181-1200; it reads PWNVFDFLIVIGSIIDVILS. The Extracellular segment spans residues 1201 to 1231; it reads EIDTFLASSGGLYCLGGGCGNVDPDESARIS. Residues 1232 to 1250 form a helical membrane-spanning segment; that stretch reads SAFFRLFRVMRLVKLLNRA. Residues 1251–1268 lie on the Cytoplasmic side of the membrane; that stretch reads EGVRTLLWTFIKSFQALP. A helical membrane pass occupies residues 1269–1289; it reads YVALLIVMLFFIYAVIGMQMF. Residues 1290–1311 are Extracellular-facing; the sequence is GKIAMVDGTQINRNNNFQTFPQ. The pore-forming intramembrane region spans 1312–1330; the sequence is AVLLLFRCATGEAWQEILL. The Selectivity filter of repeat IV motif lies at 1321-1324; the sequence is TGEA. Over 1331 to 1356 the chain is Extracellular; sequence ACSYGKLCDPESDYAPGEEHTCGTNF. Positions 1337–1403 are dihydropyridine binding; the sequence is LCDPESDYAP…LGPHHLDEFK (67 aa). Residues Cys1338 and Cys1352 are joined by a disulfide bond. Phenylalkylamine binding stretches follow at residues 1349–1391 and 1349–1392; these read EHTC…TRDW and EHTC…RDWS. A helical membrane pass occupies residues 1357–1381; sequence AYYYFISFYMLCAFLIINLFVAVIM. Residues 1382 to 1852 lie on the Cytoplasmic side of the membrane; sequence DNFDYLTRDW…PEGGAVPWEP (471 aa). The segment at 1522-1542 is interaction with calmodulin; it reads KFYATFLIQEHFRKFMKRQEE. Ser1575 carries the phosphoserine; by PKA and CAMK2 modification. Residue Thr1579 is modified to Phosphothreonine. Residue Ser1617 is modified to Phosphoserine; by PKA. Disordered stretches follow at residues 1702–1721 and 1727–1762; these read GPLS…HVDK and TQRG…PTSR. Residues 1747-1757 are compositionally biased toward basic and acidic residues; sequence KAEHPVQKEGK.

Belongs to the calcium channel alpha-1 subunit (TC 1.A.1.11) family. CACNA1S subfamily. In terms of assembly, component of a calcium channel complex consisting of a pore-forming alpha subunit (CACNA1S) and the ancillary subunits CACNB1 or CACNB2, CACNG1 and CACNA2D1. The channel complex contains alpha, beta, gamma and delta subunits in a 1:1:1:1 ratio, i.e. it contains either CACNB1 or CACNB2. CACNA1S channel activity is modulated by the auxiliary subunits (CACNB1 or CACNB2, CACNG1 and CACNA2D1). Interacts with DYSF and JSRP1. Interacts with RYR1. Interacts with STAC, STAC2 and STAC3 (via their SH3 domains). Interacts with CALM. Post-translationally, the alpha-1S subunit is found in two isoforms in the skeletal muscle: a minor form of 212 kDa containing the complete amino acid sequence, and a major form of 190 kDa derived from the full-length form by post-translational proteolysis close to Phe-1690. Phosphorylated. Phosphorylation by PKA activates the calcium channel. Both the minor and major forms are phosphorylated in vitro by PKA. Phosphorylation at Ser-1575 is involved in beta-adrenergic-mediated regulation of the channel.

Its subcellular location is the cell membrane. The protein resides in the sarcolemma. It is found in the T-tubule. The enzyme catalyses Ca(2+)(in) = Ca(2+)(out). Its activity is regulated as follows. Channel activity is blocked by dihydropyridines (DHP), phenylalkylamines, and by benzothiazepines. In terms of biological role, pore-forming, alpha-1S subunit of the voltage-gated calcium channel that gives rise to L-type calcium currents in skeletal muscle. Calcium channels containing the alpha-1S subunit play an important role in excitation-contraction coupling in skeletal muscle via their interaction with RYR1, which triggers Ca(2+) release from the sarcplasmic reticulum and ultimately results in muscle contraction. Long-lasting (L-type) calcium channels belong to the 'high-voltage activated' (HVA) group. The protein is Voltage-dependent L-type calcium channel subunit alpha-1S (Cacna1s) of Mus musculus (Mouse).